The primary structure comprises 795 residues: Phenylalanine--tRNA ligase beta subunit (795 aa).

The 110-residue stretch at 39–148 folds into the tRNA-binding domain; it reads AGEFTGVKVG…EGTTLGADVR (110 aa). A B5 domain is found at 401 to 476; the sequence is PKANTVELRR…RIYGYNNIPN (76 aa). Asp-454, Asp-460, Glu-463, and Glu-464 together coordinate Mg(2+). In terms of domain architecture, FDX-ACB spans 701-794; sequence SKFPANRRDI…IGEKFSATLR (94 aa).

Belongs to the phenylalanyl-tRNA synthetase beta subunit family. Type 1 subfamily. As to quaternary structure, tetramer of two alpha and two beta subunits. It depends on Mg(2+) as a cofactor.

The protein localises to the cytoplasm. It carries out the reaction tRNA(Phe) + L-phenylalanine + ATP = L-phenylalanyl-tRNA(Phe) + AMP + diphosphate + H(+). The protein is Phenylalanine--tRNA ligase beta subunit of Aliivibrio fischeri (strain ATCC 700601 / ES114) (Vibrio fischeri).